The chain runs to 314 residues: DNA-directed RNA polymerase subunit alpha (314 aa).

The tract at residues 1 to 228 (MIEFEKPNIH…EHLGLFMDIS (228 aa)) is alpha N-terminal domain (alpha-NTD). Residues 242-314 (PVAASASDSA…DMNLGFRKED (73 aa)) form an alpha C-terminal domain (alpha-CTD) region.

It belongs to the RNA polymerase alpha chain family. In terms of assembly, homodimer. The RNAP catalytic core consists of 2 alpha, 1 beta, 1 beta' and 1 omega subunit. When a sigma factor is associated with the core the holoenzyme is formed, which can initiate transcription.

The enzyme catalyses RNA(n) + a ribonucleoside 5'-triphosphate = RNA(n+1) + diphosphate. Functionally, DNA-dependent RNA polymerase catalyzes the transcription of DNA into RNA using the four ribonucleoside triphosphates as substrates. The protein is DNA-directed RNA polymerase subunit alpha of Leuconostoc mesenteroides subsp. mesenteroides (strain ATCC 8293 / DSM 20343 / BCRC 11652 / CCM 1803 / JCM 6124 / NCDO 523 / NBRC 100496 / NCIMB 8023 / NCTC 12954 / NRRL B-1118 / 37Y).